Reading from the N-terminus, the 1098-residue chain is Eukaryotic translation initiation factor 3 subunit A (1098 aa).

Positions 324–503 constitute a PCI domain; the sequence is AQEQATRVLL…DCVRFGSSDA (180 aa). The stretch at 574 to 844 forms a coiled coil; that stretch reads TEIERIHRRK…ARQAVIDSQR (271 aa). Disordered stretches follow at residues 599–648 and 805–1098; these read EKAA…KIKR and RAEK…NWRR. Composition is skewed to basic and acidic residues over residues 608-648, 805-857, and 877-895; these read QAKR…KIKR, RAEK…REME, and MPQR…EPFR. Over residues 905 to 914 the composition is skewed to polar residues; it reads DSSWRSSAQP. 2 stretches are compositionally biased toward basic and acidic residues: residues 916–978 and 1054–1079; these read RKPD…ERGA and LPPR…RDGP. Low complexity predominate over residues 1080-1098; it reads NRNSGANNAGNADSANWRR.

The protein belongs to the eIF-3 subunit A family. In terms of assembly, component of the eukaryotic translation initiation factor 3 (eIF-3) complex.

Its subcellular location is the cytoplasm. RNA-binding component of the eukaryotic translation initiation factor 3 (eIF-3) complex, which is involved in protein synthesis of a specialized repertoire of mRNAs and, together with other initiation factors, stimulates binding of mRNA and methionyl-tRNAi to the 40S ribosome. The eIF-3 complex specifically targets and initiates translation of a subset of mRNAs involved in cell proliferation. The chain is Eukaryotic translation initiation factor 3 subunit A from Caenorhabditis briggsae.